A 539-amino-acid chain; its full sequence is Acrosin-binding protein (539 aa).

The N-terminal stretch at 1–25 (MRQLAAGSLLSLLKVLLLPLAPAPA) is a signal peptide. The tract at residues 26–106 (QDANSASTPG…ASWFESFCQF (81 aa)) is pro-ACR binding. A propeptide spans 26-269 (QDANSASTPG…NPFSFTPRVR (244 aa)) (removed in active form). The interval 186 to 259 (LGGQEQGQEH…PKFQSEFVSS (74 aa)) is disordered. Residues 192–211 (GQEHKQEHKQEQGQEHKQDE) are compositionally biased toward basic and acidic residues. The segment covering 212 to 238 (GQEQEEQEEEQEEEGKQEEGQGTEESL) has biased composition (acidic residues). Residues 315 to 423 (LPHVDALLVL…TQIGTLKSGR (109 aa)) are pro-ACR binding.

In terms of assembly, binds specifically to the 55- and 53-kDa proacrosins and the 49-kDa acrosin intermediate, but is not capable of binding 43-kDa acrosin intermediate and 32-kDa mature acrosin. In terms of processing, the N-terminus is blocked. Post-translationally, synthesized as a 60-kDa precursor, the 35-kDa mature form is post-translationally produced by the removal of the N-terminal half of the precursor during sperm maturation in the testis and/or epididymis. Phosphorylated on Tyr residues in capacitated sperm. In terms of tissue distribution, specifically expressed in testis.

Its subcellular location is the secreted. The protein localises to the cytoplasmic vesicle. It localises to the secretory vesicle. It is found in the acrosome. Acrosomal protein that maintains proacrosin (pro-ACR) as an enzymatically inactive zymogen in the acrosome. Involved also in the acrosome formation. In Sus scrofa (Pig), this protein is Acrosin-binding protein.